Reading from the N-terminus, the 379-residue chain is Bifunctional enzyme IspD/IspF (379 aa).

Residues 1 to 213 (MSQVSLVVMG…QGFEPPFGGC (213 aa)) form a 2-C-methyl-D-erythritol 4-phosphate cytidylyltransferase region. The tract at residues 214–379 (YGGSGFDVHA…DWTKHACFNR (166 aa)) is 2-C-methyl-D-erythritol 2,4-cyclodiphosphate synthase. The a divalent metal cation site is built by Asp-220 and His-222. Residues 220-222 (DVH) and 246-247 (HS) each bind 4-CDP-2-C-methyl-D-erythritol 2-phosphate. His-254 contributes to the a divalent metal cation binding site. Residues 268–270 (DIG), 273–277 (FPDSD), 344–347 (TTTE), Phe-351, and Arg-354 each bind 4-CDP-2-C-methyl-D-erythritol 2-phosphate.

It in the N-terminal section; belongs to the IspD/TarI cytidylyltransferase family. IspD subfamily. The protein in the C-terminal section; belongs to the IspF family. A divalent metal cation serves as cofactor.

The enzyme catalyses 2-C-methyl-D-erythritol 4-phosphate + CTP + H(+) = 4-CDP-2-C-methyl-D-erythritol + diphosphate. It catalyses the reaction 4-CDP-2-C-methyl-D-erythritol 2-phosphate = 2-C-methyl-D-erythritol 2,4-cyclic diphosphate + CMP. Its pathway is isoprenoid biosynthesis; isopentenyl diphosphate biosynthesis via DXP pathway; isopentenyl diphosphate from 1-deoxy-D-xylulose 5-phosphate: step 2/6. It participates in isoprenoid biosynthesis; isopentenyl diphosphate biosynthesis via DXP pathway; isopentenyl diphosphate from 1-deoxy-D-xylulose 5-phosphate: step 4/6. Its function is as follows. Bifunctional enzyme that catalyzes the formation of 4-diphosphocytidyl-2-C-methyl-D-erythritol from CTP and 2-C-methyl-D-erythritol 4-phosphate (MEP) (IspD), and catalyzes the conversion of 4-diphosphocytidyl-2-C-methyl-D-erythritol 2-phosphate (CDP-ME2P) to 2-C-methyl-D-erythritol 2,4-cyclodiphosphate (ME-CPP) with a corresponding release of cytidine 5-monophosphate (CMP) (IspF). The sequence is that of Bifunctional enzyme IspD/IspF from Wolinella succinogenes (strain ATCC 29543 / DSM 1740 / CCUG 13145 / JCM 31913 / LMG 7466 / NCTC 11488 / FDC 602W) (Vibrio succinogenes).